Consider the following 317-residue polypeptide: Melanocyte-stimulating hormone receptor (317 aa).

The Extracellular segment spans residues 1-37 (MPVQGSQRRLLGSLNSTPTATPHLGLAANQTGARCRE). A glycan (N-linked (GlcNAc...) asparagine) is linked at Asn-29. Residues 38–63 (VSIPDGLFLSLGLVSLVENVLVVTAI) traverse the membrane as a helical segment. The Cytoplasmic portion of the chain corresponds to 64–72 (AKNRNLHSP). A helical membrane pass occupies residues 73 to 93 (MYCFICCLALSDLLVSGSNML). The Extracellular portion of the chain corresponds to 94 to 118 (ETAVTLLLEAGALVARAAVVQQLDN). Residues 119 to 140 (VIDVITCSSMLSSLCFLGAIAV) form a helical membrane-spanning segment. Residues 141–163 (DRYISIFYALRYHSIVTLPRAQR) are Cytoplasmic-facing. Residues 164–183 (AIAAIWVASVLCSTLFIAYY) form a helical membrane-spanning segment. At 184 to 191 (DHAAVLLC) the chain is on the extracellular side. Residues 192 to 211 (LVVFFLAMLVLMAVLYVHML) form a helical membrane-spanning segment. At 212 to 240 (ARACQHAQGIARLHKRQRLAHQGFGLKGA) the chain is on the cytoplasmic side. The helical transmembrane segment at 241-266 (ATLTILLGIFFLCWGPFFLHLTLIVL) threads the bilayer. Residues 267–279 (CPQHPTCSCIFKN) lie on the Extracellular side of the membrane. Residues 280 to 300 (FNLFLALIICNAIIDPLIYAF) traverse the membrane as a helical segment. Residues 301 to 317 (RSQELRRTLKEVLLCSW) lie on the Cytoplasmic side of the membrane. A lipid anchor (S-palmitoyl cysteine) is attached at Cys-315.

The protein belongs to the G-protein coupled receptor 1 family. As to quaternary structure, interacts with MGRN1, but does not undergo MGRN1-mediated ubiquitination; this interaction competes with GNAS-binding and thus inhibits agonist-induced cAMP production. Interacts with OPN3; the interaction results in a decrease in MC1R-mediated cAMP signaling and ultimately a decrease in melanin production in melanocytes. Expressed in the adrenal gland.

It localises to the cell membrane. Receptor for MSH (alpha, beta and gamma) and ACTH. The activity of this receptor is mediated by G proteins which activate adenylate cyclase. Mediates melanogenesis, the production of eumelanin (black/brown) and phaeomelanin (red/yellow), via regulation of cAMP signaling in melanocytes. The polypeptide is Melanocyte-stimulating hormone receptor (MC1R) (Macaca mulatta (Rhesus macaque)).